A 121-amino-acid chain; its full sequence is Putative inactive aspartokinase 3 HI_1632 (121 aa).

The protein belongs to the aspartokinase family.

The chain is Putative inactive aspartokinase 3 HI_1632 from Haemophilus influenzae (strain ATCC 51907 / DSM 11121 / KW20 / Rd).